The following is a 144-amino-acid chain: Large ribosomal subunit protein uL11 (144 aa).

The protein belongs to the universal ribosomal protein uL11 family. Part of the ribosomal stalk of the 50S ribosomal subunit. Interacts with L10 and the large rRNA to form the base of the stalk. L10 forms an elongated spine to which L12 dimers bind in a sequential fashion forming a multimeric L10(L12)X complex. Post-translationally, one or more lysine residues are methylated.

In terms of biological role, forms part of the ribosomal stalk which helps the ribosome interact with GTP-bound translation factors. The protein is Large ribosomal subunit protein uL11 of Streptomyces sp. (strain FRI-5).